The primary structure comprises 432 residues: Serine hydroxymethyltransferase (432 aa).

Residues leucine 127 and 131–133 contribute to the (6S)-5,6,7,8-tetrahydrofolate site; that span reads GHL. Lysine 236 carries the post-translational modification N6-(pyridoxal phosphate)lysine.

This sequence belongs to the SHMT family. As to quaternary structure, homodimer. Pyridoxal 5'-phosphate serves as cofactor.

Its subcellular location is the cytoplasm. It catalyses the reaction (6R)-5,10-methylene-5,6,7,8-tetrahydrofolate + glycine + H2O = (6S)-5,6,7,8-tetrahydrofolate + L-serine. Its pathway is one-carbon metabolism; tetrahydrofolate interconversion. It participates in amino-acid biosynthesis; glycine biosynthesis; glycine from L-serine: step 1/1. Functionally, catalyzes the reversible interconversion of serine and glycine with tetrahydrofolate (THF) serving as the one-carbon carrier. This reaction serves as the major source of one-carbon groups required for the biosynthesis of purines, thymidylate, methionine, and other important biomolecules. Also exhibits THF-independent aldolase activity toward beta-hydroxyamino acids, producing glycine and aldehydes, via a retro-aldol mechanism. This Rhizobium etli (strain ATCC 51251 / DSM 11541 / JCM 21823 / NBRC 15573 / CFN 42) protein is Serine hydroxymethyltransferase.